The primary structure comprises 467 residues: Glycosyl hydrolase family 109 protein (467 aa).

Positions 1 to 31 (MKNFNRRAFLKAAGATTAGLVTSGLILPASA) form a signal peptide, tat-type signal. NAD(+) contacts are provided by residues 66–67 (QR), Asp88, 137–140 (WQWH), 157–158 (EV), and Asn186. Substrate is bound by residues Tyr215, Arg234, 246-249 (YPTH), and Tyr328. Residue Tyr246 participates in NAD(+) binding.

It belongs to the Gfo/Idh/MocA family. Glycosyl hydrolase 109 subfamily. It depends on NAD(+) as a cofactor. Predicted to be exported by the Tat system. The position of the signal peptide cleavage has not been experimentally proven.

Its function is as follows. Glycosidase. This chain is Glycosyl hydrolase family 109 protein, found in Shewanella woodyi (strain ATCC 51908 / MS32).